Consider the following 353-residue polypeptide: WD repeat-containing protein 55 (353 aa).

7 WD repeats span residues 4–43 (DLGA…SLVR), 49–88 (AHKE…QVAH), 92–130 (AHED…CSHE), 133–172 (AHED…VQSQ), 175–214 (FSED…DCSD), 218–257 (DLAP…IIQP), and 260–299 (SHDY…EGSN). Residues 300–353 (VNSGNASGAAEDSDSDNDGMDLDNDPSKSSKGSKRKTKSKANTLNATNNFFADL) form a disordered region. The segment covering 310-323 (EDSDSDNDGMDLDN) has biased composition (acidic residues). Residues 339–353 (KANTLNATNNFFADL) are compositionally biased toward low complexity.

This sequence belongs to the WD repeat WDR55 family. As to quaternary structure, interacts with DDB1A. Highly expressed in roots. Expressed in cotyledons, leaves, buds and flowers.

It is found in the nucleus. It localises to the cytoplasm. In terms of biological role, required for male and female gametogenesis, seed development, and embryo and endosperm development at early stages. Involved in the establishment of bilateral symmetry in the transition from the globular to the heart embryo stage. May act in the frame of a CRL4 complex. Required for proper vegetative growth and organization of the adult plant body. May play a role in hormonal control of plant development. The polypeptide is WD repeat-containing protein 55 (Arabidopsis thaliana (Mouse-ear cress)).